Consider the following 264-residue polypeptide: Thiazole synthase (264 aa).

Residue Lys-106 is the Schiff-base intermediate with DXP of the active site. 1-deoxy-D-xylulose 5-phosphate contacts are provided by residues Gly-167, 193 to 194, and 215 to 216; these read AG and NS.

It belongs to the ThiG family. In terms of assembly, homotetramer. Forms heterodimers with either ThiH or ThiS.

It localises to the cytoplasm. It catalyses the reaction [ThiS sulfur-carrier protein]-C-terminal-Gly-aminoethanethioate + 2-iminoacetate + 1-deoxy-D-xylulose 5-phosphate = [ThiS sulfur-carrier protein]-C-terminal Gly-Gly + 2-[(2R,5Z)-2-carboxy-4-methylthiazol-5(2H)-ylidene]ethyl phosphate + 2 H2O + H(+). It functions in the pathway cofactor biosynthesis; thiamine diphosphate biosynthesis. Functionally, catalyzes the rearrangement of 1-deoxy-D-xylulose 5-phosphate (DXP) to produce the thiazole phosphate moiety of thiamine. Sulfur is provided by the thiocarboxylate moiety of the carrier protein ThiS. In vitro, sulfur can be provided by H(2)S. This Pseudomonas savastanoi pv. phaseolicola (strain 1448A / Race 6) (Pseudomonas syringae pv. phaseolicola (strain 1448A / Race 6)) protein is Thiazole synthase.